Here is a 149-residue protein sequence, read N- to C-terminus: Large ribosomal subunit protein bL9 (149 aa).

It belongs to the bacterial ribosomal protein bL9 family.

In terms of biological role, binds to the 23S rRNA. In Thermotoga maritima (strain ATCC 43589 / DSM 3109 / JCM 10099 / NBRC 100826 / MSB8), this protein is Large ribosomal subunit protein bL9.